The following is a 514-amino-acid chain: 2-isopropylmalate synthase (514 aa).

The region spanning 5–267 (LIIFDTTLRD…HTDIETREIV (263 aa)) is the Pyruvate carboxyltransferase domain. Mn(2+) contacts are provided by aspartate 14, histidine 202, histidine 204, and asparagine 238. The regulatory domain stretch occupies residues 393-514 (KLVALRVCSE…QRTHPQVGDV (122 aa)).

It belongs to the alpha-IPM synthase/homocitrate synthase family. LeuA type 1 subfamily. Homodimer. Mn(2+) serves as cofactor.

Its subcellular location is the cytoplasm. The enzyme catalyses 3-methyl-2-oxobutanoate + acetyl-CoA + H2O = (2S)-2-isopropylmalate + CoA + H(+). Its pathway is amino-acid biosynthesis; L-leucine biosynthesis; L-leucine from 3-methyl-2-oxobutanoate: step 1/4. Its function is as follows. Catalyzes the condensation of the acetyl group of acetyl-CoA with 3-methyl-2-oxobutanoate (2-ketoisovalerate) to form 3-carboxy-3-hydroxy-4-methylpentanoate (2-isopropylmalate). This chain is 2-isopropylmalate synthase, found in Methylococcus capsulatus (strain ATCC 33009 / NCIMB 11132 / Bath).